Consider the following 622-residue polypeptide: 1-deoxy-D-xylulose-5-phosphate synthase (622 aa).

Residues H80 and 121–123 (GHS) contribute to the thiamine diphosphate site. D152 is a binding site for Mg(2+). Residues 153–154 (GA), N181, Y288, and E370 contribute to the thiamine diphosphate site. N181 contacts Mg(2+).

Belongs to the transketolase family. DXPS subfamily. As to quaternary structure, homodimer. The cofactor is Mg(2+). Thiamine diphosphate is required as a cofactor.

The enzyme catalyses D-glyceraldehyde 3-phosphate + pyruvate + H(+) = 1-deoxy-D-xylulose 5-phosphate + CO2. It participates in metabolic intermediate biosynthesis; 1-deoxy-D-xylulose 5-phosphate biosynthesis; 1-deoxy-D-xylulose 5-phosphate from D-glyceraldehyde 3-phosphate and pyruvate: step 1/1. Its function is as follows. Catalyzes the acyloin condensation reaction between C atoms 2 and 3 of pyruvate and glyceraldehyde 3-phosphate to yield 1-deoxy-D-xylulose-5-phosphate (DXP). This Shewanella oneidensis (strain ATCC 700550 / JCM 31522 / CIP 106686 / LMG 19005 / NCIMB 14063 / MR-1) protein is 1-deoxy-D-xylulose-5-phosphate synthase.